A 259-amino-acid chain; its full sequence is UPF0246 protein VF_2109 (259 aa).

The protein belongs to the UPF0246 family.

This Aliivibrio fischeri (strain ATCC 700601 / ES114) (Vibrio fischeri) protein is UPF0246 protein VF_2109.